We begin with the raw amino-acid sequence, 366 residues long: 3-isopropylmalate dehydrogenase (366 aa).

78–91 is an NAD(+) binding site; that stretch reads GPQWTHLKGSESPE. The substrate site is built by arginine 99, arginine 109, arginine 138, and aspartate 227. Mg(2+) is bound by residues aspartate 227, aspartate 251, and aspartate 255. 285–297 serves as a coordination point for NAD(+); sequence GSAPDIAEKNIAN.

Belongs to the isocitrate and isopropylmalate dehydrogenases family. LeuB type 1 subfamily. As to quaternary structure, homodimer. The cofactor is Mg(2+). Requires Mn(2+) as cofactor.

It localises to the cytoplasm. The catalysed reaction is (2R,3S)-3-isopropylmalate + NAD(+) = 4-methyl-2-oxopentanoate + CO2 + NADH. It functions in the pathway amino-acid biosynthesis; L-leucine biosynthesis; L-leucine from 3-methyl-2-oxobutanoate: step 3/4. Catalyzes the oxidation of 3-carboxy-2-hydroxy-4-methylpentanoate (3-isopropylmalate) to 3-carboxy-4-methyl-2-oxopentanoate. The product decarboxylates to 4-methyl-2 oxopentanoate. The chain is 3-isopropylmalate dehydrogenase from Blochmanniella pennsylvanica (strain BPEN).